An 809-amino-acid chain; its full sequence is MSKSSKVGMTDVSVPKSAVLKKRNQREVEAEVDESSEEEFEMDGLLDAEASEDDEEDEENSEDDEEEDSDKELNELLGEEEDPSDYDSENFSDEPQESDTRSITDAISGVKIRSLSDISSQDKQEFHTKYSDGSERIIKPEIEPVYDSDDSDAENFNTIGDIPLSAYDEMPHLGYDINGKRIMRPAKGSALDQLLESIDLPQGWTGLLDQNTGSSLNLTDEELELIRKIQQQENTDANIDPYEATIEWFTSKVEVMPLTAVPEPKRRFVPSKHEAKRVMKIVRAIREGRIIPPSKVKEQIEEERLNYDLWNDDDIAVEDHIMNLRAPKLPPPTNEESYNPPEEYLLTEEEKKQWESLDPADRERNFLPQKFGALRKVPGYQESVRERFERCLDLYLAPRVRHNKLNIDPESLIPELPSPKDLRPFPIRCSTVYQGHTDKIRTISIDPQGLWLATGSDDGSVRIWEILTGRQVFNVQLINKEINDEDHIESLEWNPDSQTGILAVCAGENIYLVVPPIFGFDIENMGRLRIESGWGYDTFGNKTKEEKFKNDEGNEDEDDEDDSATSTAVKKDVARWFPPNQEQTKLGISAIIQCRKTVKKVSWHRKGDYFVTVSPDSKNTAVLIHQLSKHLSQSPFKKSKGIIMDAKFHPFKPQLFVASQRQVRIYDLAQQVLVKKLMPGVRLLSTIDIHPRGDNLLASSYDKRVLWHDLDLSATPYKTLRYHEKAVRSIKFHKGNLPLFASASDDGNIHIFHGTVYDDLMTNPLLVPLKKLTGHKIVNSIGILDLIWHPKEAWLFSAGADGTARLWTT.

The tract at residues 1-107 is disordered; sequence MSKSSKVGMT…SDTRSITDAI (107 aa). Acidic residues-rich tracts occupy residues 30 to 70 and 77 to 97; these read AEVD…EDSD and LGEE…EPQE. A required for interaction with NOP7 region spans residues 267–383; that stretch reads RFVPSKHEAK…LRKVPGYQES (117 aa). Residues 383-419 are required for interaction with YTM1; the sequence is SVRERFERCLDLYLAPRVRHNKLNIDPESLIPELPSP. WD repeat units lie at residues 435–474 and 483–523; these read GHTD…QVFN and NDED…FDIE. The segment at 545–569 is disordered; that stretch reads EEKFKNDEGNEDEDDEDDSATSTAV. Over residues 553-563 the composition is skewed to acidic residues; it reads GNEDEDDEDDS. 5 WD repeats span residues 593 to 635, 638 to 676, 679 to 718, 722 to 762, and 778 to 809; these read QCRK…SQSP, KSKG…LVKK, PGVR…TPYK, YHEK…DLMT, and VNSI…LWTT.

Belongs to the WD repeat BOP1/ERB1 family. As to quaternary structure, component of the NOP7 complex, composed of ERB1, NOP7 and YTM1. The complex is held together by ERB1, which interacts with NOP7 via its N-terminal domain and with YTM1 via a high-affinity interaction between the seven-bladed beta-propeller domains of the 2 proteins. The NOP7 complex associates with the 66S pre-ribosome.

The protein resides in the nucleus. The protein localises to the nucleolus. Its subcellular location is the nucleoplasm. Functionally, component of the NOP7 complex, which is required for maturation of the 25S and 5.8S ribosomal RNAs and formation of the 60S ribosome. This chain is Ribosome biogenesis protein ERB1, found in Scheffersomyces stipitis (strain ATCC 58785 / CBS 6054 / NBRC 10063 / NRRL Y-11545) (Yeast).